The following is a 154-amino-acid chain: Pro-corazonin (154 aa).

Residues 1–19 (MLRLLLLPLFLFTLSMCMG) form the signal peptide. Glutamine 20 bears the Pyrrolidone carboxylic acid mark. At asparagine 30 the chain carries Asparagine amide. The propeptide occupies 70 to 154 (LERCLSQLQR…SAEPNVFGKH (85 aa)). Residues 91-119 (DFNANRVDPDPENSAHPRLSNSNGENVLY) are disordered. Over residues 109–119 (LSNSNGENVLY) the composition is skewed to polar residues.

This sequence belongs to the corazonin family. In terms of tissue distribution, from late embryo to larva, expression is consistently detected in three neuronal groups: dorso-lateral neurons (DL), dorso-medial neurons (DM), and neurons in the ventral nerve cord (vCrz). Both the vCrz and DM groups die via programmed cell death during metamorphosis, whereas the DL neurons persist to adulthood. In adults, expression is seen in a cluster of six to eight neurons per lobe in the pars lateralis (DLP), in numerous neuronal cells in the optic lobes, and in a novel group of four abdominal ganglionic neurons present only in males (ms-aCrz). Projections of the ms-aCrz neurons terminate within the ventral nerve cord, implying a role as interneurons. Terminals of the DLP neurons are found in the retrocerebral complex that produces juvenile hormone and adipokinetic hormone, located in the vicinity of terminals emanating from PDF-containing pacemaking neurons.

It localises to the secreted. Its function is as follows. Cardioactive peptide. Corazonin is probably involved in the physiological regulation of the heart beat. Clock (Clk) and cycle (cyc) proteins negatively regulate Crz transcription in a cell-specific manner. The chain is Pro-corazonin (Crz) from Drosophila melanogaster (Fruit fly).